Reading from the N-terminus, the 89-residue chain is DNA/RNA-binding protein Alba (89 aa).

Belongs to the histone-like Alba family.

It is found in the cytoplasm. The protein localises to the chromosome. In terms of biological role, binds double-stranded DNA tightly but without sequence specificity. Involved in DNA compaction. The polypeptide is DNA/RNA-binding protein Alba (Methanothrix thermoacetophila (strain DSM 6194 / JCM 14653 / NBRC 101360 / PT) (Methanosaeta thermophila)).